Reading from the N-terminus, the 170-residue chain is 4-hydroxyphenylacetate 3-monooxygenase reductase component (170 aa).

This sequence belongs to the non-flavoprotein flavin reductase family. HpaC subfamily. As to quaternary structure, homodimer. 4-HPA 3-monooxygenase consists of a reductase component HpaC and an oxygenase component HpaB.

The catalysed reaction is a reduced flavin + NAD(+) = an oxidized flavin + NADH + 2 H(+). It participates in aromatic compound metabolism; 4-hydroxyphenylacetate degradation; pyruvate and succinate semialdehyde from 4-hydroxyphenylacetate: step 1/7. In terms of biological role, catalyzes the reduction of free flavins (FMN, FAD and riboflavin) by NADH. Subsequently, the reduced flavins diffuse to the large HpaB component or to other electron acceptors such as cytochrome c and Fe(3+) ion. In Salmonella dublin, this protein is 4-hydroxyphenylacetate 3-monooxygenase reductase component (hpaC).